Consider the following 420-residue polypeptide: Gamma-glutamyl phosphate reductase (420 aa).

Belongs to the gamma-glutamyl phosphate reductase family.

The protein resides in the cytoplasm. The enzyme catalyses L-glutamate 5-semialdehyde + phosphate + NADP(+) = L-glutamyl 5-phosphate + NADPH + H(+). The protein operates within amino-acid biosynthesis; L-proline biosynthesis; L-glutamate 5-semialdehyde from L-glutamate: step 2/2. Its function is as follows. Catalyzes the NADPH-dependent reduction of L-glutamate 5-phosphate into L-glutamate 5-semialdehyde and phosphate. The product spontaneously undergoes cyclization to form 1-pyrroline-5-carboxylate. This Streptococcus pneumoniae (strain ATCC 700669 / Spain 23F-1) protein is Gamma-glutamyl phosphate reductase.